Here is a 210-residue protein sequence, read N- to C-terminus: MGQKVHPTGFRLGTTKTWDTRWFADRNYADLLLEDIKIRAWLKKRLAHASVSKIVIERPAQKARINIHTARPGIIIGKKGGDIEKLKNDIKAITSSEVQINIVEIRKPEADAQLVAENVAQQLERRVAFRRSMKRAVTSAMRLGAEGIRINCAGRLGGAEIARTEWYREGRVPLHTLRADIDYGFAEAHTTYGIIGVKVWVYKGMLIEKK.

Residues Ile-38–Arg-106 form the KH type-2 domain.

Belongs to the universal ribosomal protein uS3 family. Part of the 30S ribosomal subunit. Forms a tight complex with proteins S10 and S14.

Its function is as follows. Binds the lower part of the 30S subunit head. Binds mRNA in the 70S ribosome, positioning it for translation. The protein is Small ribosomal subunit protein uS3 of Magnetococcus marinus (strain ATCC BAA-1437 / JCM 17883 / MC-1).